The primary structure comprises 370 residues: DNA replication and repair protein RecF (370 aa).

30 to 37 (GENAQGKT) contributes to the ATP binding site.

It belongs to the RecF family.

It localises to the cytoplasm. In terms of biological role, the RecF protein is involved in DNA metabolism; it is required for DNA replication and normal SOS inducibility. RecF binds preferentially to single-stranded, linear DNA. It also seems to bind ATP. In Staphylococcus carnosus (strain TM300), this protein is DNA replication and repair protein RecF.